A 193-amino-acid polypeptide reads, in one-letter code: UPF0301 protein SCO2948 (193 aa).

Belongs to the UPF0301 (AlgH) family.

The sequence is that of UPF0301 protein SCO2948 from Streptomyces coelicolor (strain ATCC BAA-471 / A3(2) / M145).